The primary structure comprises 469 residues: GTPase Der (469 aa).

EngA-type G domains follow at residues 3–167 (PTVA…PDEV) and 175–348 (PKFA…RAAM). GTP is bound by residues 9-16 (GRPNVGKS), 56-60 (DTGGF), 119-122 (NKAE), 181-188 (GRPNVGKS), 228-232 (DTAGV), and 293-296 (NKWD). The KH-like domain maps to 349–433 (SKLATPKLTR…PLRVQYKSSE (85 aa)). The interval 429 to 469 (YKSSENPFDNDEKDKPRAKPKPMSKMRGREKEVRYGKNSKK) is disordered.

The protein belongs to the TRAFAC class TrmE-Era-EngA-EngB-Septin-like GTPase superfamily. EngA (Der) GTPase family. As to quaternary structure, associates with the 50S ribosomal subunit.

Its function is as follows. GTPase that plays an essential role in the late steps of ribosome biogenesis. This chain is GTPase Der, found in Chromobacterium violaceum (strain ATCC 12472 / DSM 30191 / JCM 1249 / CCUG 213 / NBRC 12614 / NCIMB 9131 / NCTC 9757 / MK).